Reading from the N-terminus, the 2499-residue chain is Probable polyketide synthase 22 (2499 aa).

The region spanning 11–430 (DNQVAIVGLG…GSNACVLLSE (420 aa)) is the Ketosynthase family 3 (KS3) domain. Catalysis depends on for beta-ketoacyl synthase activity residues cysteine 177, histidine 316, and histidine 354. An acyl/malonyl transferases region spans residues 623–656 (GITPSIIVGHSLGEVASAFCSGMIDLETACFVIY). Serine 633 acts as the For acyl/malonyl transferase activity in catalysis. Residues 922–1044 (APINQLGNKN…SRILMKSLDV (123 aa)) form an N-terminal hotdog fold region. The PKS/mFAS DH domain maps to 922–1209 (APINQLGNKN…IASTLSTKSE (288 aa)). Histidine 956 acts as the Proton acceptor; for dehydratase activity in catalysis. Residues 1059–1209 (NWSTLKREQL…IASTLSTKSE (151 aa)) form a C-terminal hotdog fold region. The Proton donor; for dehydratase activity role is filled by aspartate 1121. The region spanning 2414–2491 (EKEFSIRQDI…QIINIVTTKV (78 aa)) is the Carrier domain. Serine 2451 is modified (O-(pantetheine 4'-phosphoryl)serine).

The cofactor is pantetheine 4'-phosphate.

Its function is as follows. Probable polyketide synthase. The chain is Probable polyketide synthase 22 (pks22) from Dictyostelium discoideum (Social amoeba).